The primary structure comprises 343 residues: MLLLAIESSCDETAAAVVRDGRIILSNIVASQISVHAGYGGVVPEIASRKHLETISTVIEEALQAAGVSLTDVDGIAVTQGPGLAGALLVGISTAKAMAYALGVPIAGVNHIESHILAIFLERSIEFPFVALAVSGGHTHLYLVEAVGRYKTLGQTLDDAAGEAFDKVAKLLGLPYPGGALIDRLAAEGDPEAIRFPRPLMRDESFNFSFSGLKTSVLNYLQKNPAAADGRALNDLCASFQAAVCDVLVSKTAAAVSATGIKRVVVAGGVACNNGLRREMSRLAELKGIELHIPSPLLCSDNAAMIAVPGDYYLSNNILSGFDIDALPVWPLDSIASRLTKGS.

Positions 111 and 115 each coordinate Fe cation. Residues 133–137 (AVSGG), aspartate 166, glycine 179, aspartate 183, and asparagine 273 contribute to the substrate site. Aspartate 301 is a Fe cation binding site.

It belongs to the KAE1 / TsaD family. Fe(2+) is required as a cofactor.

It is found in the cytoplasm. It carries out the reaction L-threonylcarbamoyladenylate + adenosine(37) in tRNA = N(6)-L-threonylcarbamoyladenosine(37) in tRNA + AMP + H(+). Required for the formation of a threonylcarbamoyl group on adenosine at position 37 (t(6)A37) in tRNAs that read codons beginning with adenine. Is involved in the transfer of the threonylcarbamoyl moiety of threonylcarbamoyl-AMP (TC-AMP) to the N6 group of A37, together with TsaE and TsaB. TsaD likely plays a direct catalytic role in this reaction. The protein is tRNA N6-adenosine threonylcarbamoyltransferase of Geotalea uraniireducens (strain Rf4) (Geobacter uraniireducens).